A 552-amino-acid polypeptide reads, in one-letter code: Glutamine--tRNA ligase (552 aa).

The 'HIGH' region signature appears at 34 to 44 (PEPNGYLHIGH). Residues 35–37 (EPN) and 41–47 (HIGHAKS) each bind ATP. L-glutamine-binding residues include Asp67 and Tyr212. Residues Thr231, 261 to 262 (RL), and 269 to 271 (MSK) contribute to the ATP site. The 'KMSKS' region signature appears at 268–272 (LMSKR).

The protein belongs to the class-I aminoacyl-tRNA synthetase family. Monomer.

The protein resides in the cytoplasm. It carries out the reaction tRNA(Gln) + L-glutamine + ATP = L-glutaminyl-tRNA(Gln) + AMP + diphosphate. The protein is Glutamine--tRNA ligase of Hamiltonella defensa subsp. Acyrthosiphon pisum (strain 5AT).